A 599-amino-acid chain; its full sequence is UvrABC system protein C (599 aa).

A GIY-YIG domain is found at glutamine 18–isoleucine 96. The 36-residue stretch at lysine 207–valine 242 folds into the UVR domain.

It belongs to the UvrC family. Interacts with UvrB in an incision complex.

It localises to the cytoplasm. Its function is as follows. The UvrABC repair system catalyzes the recognition and processing of DNA lesions. UvrC both incises the 5' and 3' sides of the lesion. The N-terminal half is responsible for the 3' incision and the C-terminal half is responsible for the 5' incision. This is UvrABC system protein C from Acinetobacter baumannii (strain SDF).